The sequence spans 133 residues: Putative biopolymer transport protein ExbD-like 1 (133 aa).

The Cytoplasmic portion of the chain corresponds to 1–15 (MNYDNYWDEDKPELN). A helical membrane pass occupies residues 16–32 (ITPLVDVMLVLLAILMV). The Periplasmic segment spans residues 33–133 (TTPTLTYKEE…FLKVSLITSP (101 aa)).

This sequence belongs to the ExbD/TolR family.

It is found in the cell inner membrane. This Helicobacter pylori (strain J99 / ATCC 700824) (Campylobacter pylori J99) protein is Putative biopolymer transport protein ExbD-like 1.